We begin with the raw amino-acid sequence, 395 residues long: ASTRA-associated protein 1 (395 aa).

WD repeat units follow at residues 7 to 48 (AHVS…PIAS), 221 to 260 (HYPE…LPVV), and 343 to 386 (INPG…TGYN).

The protein belongs to the WD repeat ASA1 family. In terms of assembly, component of the ASTRA chromatin remodeling machinery complex.

It is found in the nucleus. Component of the ASTRA complex involved in chromatin remodeling. This Eremothecium gossypii (strain ATCC 10895 / CBS 109.51 / FGSC 9923 / NRRL Y-1056) (Yeast) protein is ASTRA-associated protein 1 (ASA1).